We begin with the raw amino-acid sequence, 268 residues long: Elongation factor Ts (268 aa).

Residues 81-84 (TDFV) are involved in Mg(2+) ion dislocation from EF-Tu.

The protein belongs to the EF-Ts family.

The protein localises to the cytoplasm. Its function is as follows. Associates with the EF-Tu.GDP complex and induces the exchange of GDP to GTP. It remains bound to the aminoacyl-tRNA.EF-Tu.GTP complex up to the GTP hydrolysis stage on the ribosome. The sequence is that of Elongation factor Ts from Buchnera aphidicola subsp. Acyrthosiphon pisum (strain 5A).